The primary structure comprises 120 residues: Large ribosomal subunit protein uL18 (120 aa).

Belongs to the universal ribosomal protein uL18 family. As to quaternary structure, part of the 50S ribosomal subunit; part of the 5S rRNA/L5/L18/L25 subcomplex. Contacts the 5S and 23S rRNAs.

This is one of the proteins that bind and probably mediate the attachment of the 5S RNA into the large ribosomal subunit, where it forms part of the central protuberance. The polypeptide is Large ribosomal subunit protein uL18 (Bacillus cereus (strain AH820)).